The sequence spans 274 residues: Leucine-rich repeat-containing protein 10 (274 aa).

8 LRR repeats span residues 30-51, 52-74, 76-97, 98-120, 121-143, 145-166, 167-189, and 191-213; these read LDRM…VCSF, TELV…LAQL, NLQI…VCTL, KQLC…LSLL, QNLR…VCEL, LLKT…LRRL, RELR…LLRM, and FLEV…HLTN. The interval 236–274 is disordered; the sequence is RVGRWAEETPEPDPRKARRYALAKEENQEPPPPLLPSSS. A compositionally biased stretch (basic and acidic residues) spans 239 to 250; it reads RWAEETPEPDPR. The segment covering 264–274 has biased composition (pro residues); it reads EPPPPLLPSSS.

As to expression, detected specifically in the heart.

It localises to the nucleus. Its function is as follows. May play important roles in cardiac development and/or cardiac function. This chain is Leucine-rich repeat-containing protein 10 (Lrrc10), found in Mus musculus (Mouse).